A 367-amino-acid polypeptide reads, in one-letter code: MSDSQTLVVKLGTSVLTGGSRRLNRAHIVELVRQCAQLHAAGHRIVIVTSGAIAAGREHLGYPELPATIASKQLLAAVGQSRLIQLWEQLFSIYGIHIGQMLLTRADMEDRERFLNARDTLRALLDNHIVPVINENDAVATAEIKVGDNDNLSALAAILAGADKLLLLTDQQGLFTADPRSNPQAELIKDVYGVDDALRSIAGDSVSGLGTGGMSTKLQAADVACRAGIDTIIASGSKPGVIGDVMEGISVGTRFHAQASPLENRKRWIFGAPPAGEITVDEGATAAMLERGSSLLPKGIKSVTGNFSRGEVIRICNLQGRDIAHGVSRYNSDALRRIAGHHSQQIDAILGYEYGPVAVHRDDMITR.

Position 10 (Lys-10) interacts with ATP. 3 residues coordinate substrate: Ser-50, Asp-137, and Asn-149. ATP contacts are provided by residues 169-170 (TD) and 211-217 (TGGMSTK). A PUA domain is found at 275-353 (AGEITVDEGA…QQIDAILGYE (79 aa)).

It belongs to the glutamate 5-kinase family.

The protein resides in the cytoplasm. The catalysed reaction is L-glutamate + ATP = L-glutamyl 5-phosphate + ADP. The protein operates within amino-acid biosynthesis; L-proline biosynthesis; L-glutamate 5-semialdehyde from L-glutamate: step 1/2. Catalyzes the transfer of a phosphate group to glutamate to form L-glutamate 5-phosphate. The chain is Glutamate 5-kinase from Salmonella agona (strain SL483).